A 280-amino-acid chain; its full sequence is Shikimate dehydrogenase (NADP(+)) (280 aa).

Shikimate-binding positions include 15–17 and threonine 62; that span reads SLS. Lysine 66 acts as the Proton acceptor in catalysis. Residues asparagine 88 and aspartate 104 each coordinate shikimate. NADP(+)-binding positions include 128-132, 151-156, and isoleucine 222; these read GAGGA and NRTEGR. Tyrosine 224 serves as a coordination point for shikimate. Glycine 245 provides a ligand contact to NADP(+).

This sequence belongs to the shikimate dehydrogenase family. In terms of assembly, homodimer.

The catalysed reaction is shikimate + NADP(+) = 3-dehydroshikimate + NADPH + H(+). The protein operates within metabolic intermediate biosynthesis; chorismate biosynthesis; chorismate from D-erythrose 4-phosphate and phosphoenolpyruvate: step 4/7. In terms of biological role, involved in the biosynthesis of the chorismate, which leads to the biosynthesis of aromatic amino acids. Catalyzes the reversible NADPH linked reduction of 3-dehydroshikimate (DHSA) to yield shikimate (SA). The sequence is that of Shikimate dehydrogenase (NADP(+)) from Methanosarcina barkeri (strain Fusaro / DSM 804).